We begin with the raw amino-acid sequence, 1131 residues long: Probable chloride channel protein UM03490-D (1131 aa).

The next 12 membrane-spanning stretches (helical) occupy residues 137–157 (GVIV…SLAT), 206–226 (VTVT…PILP), 305–325 (FPAW…CAHL), 341–361 (IKCI…TLAI), 380–397 (GPAV…ASFF), 414–434 (SSAA…LFSL), 485–505 (FEIM…AFVI), 518–538 (YLVK…AFVG), 577–597 (MVNS…VSYG), 603–623 (GIFV…GILV), 643–663 (VPCI…LAGV), and 680–702 (ALTY…DWFS). Disordered stretches follow at residues 815–835 (DGVE…LSVA) and 858–928 (ATGA…AGGG). Low complexity predominate over residues 866-877 (GLGSTSATGVAS). The CBS domain maps to 944-1000 (IDPTPLIVQPGMPLETVMDMFKNLGPRVILVVEYGRLSGLVTVKDVLKRIAMQEKAE). Residues 1061-1078 (RASASRGGAPGSQAGQAR) are compositionally biased toward low complexity. Residues 1061–1131 (RASASRGGAP…VLGAQDDDDE (71 aa)) form a disordered region. The segment covering 1104-1113 (STRQTSATKN) has biased composition (polar residues).

This sequence belongs to the chloride channel (TC 2.A.49) family.

The protein resides in the membrane. In terms of biological role, voltage-gated chloride channel. The chain is Probable chloride channel protein UM03490-D from Mycosarcoma maydis (Corn smut fungus).